The chain runs to 175 residues: Protein LHCP TRANSLOCATION DEFECT (175 aa).

The N-terminal 68 residues, 1–68 (MASSSISFSC…WFKFGKNGVD (68 aa)), are a transit peptide targeting the chloroplast. Residues 117-149 (PVDILLMLAATEGDRPKIEELLKAGADYSVKDA) form an ANK repeat.

As to quaternary structure, interacts with CAO/cpSRP43, but is not a component of the transit complex. Interacts with LHCP (via T14 domain), TIC40 and TIC110. Highly expressed in leaves and seedlings. Detected in roots, but not in germinating seeds.

Its subcellular location is the plastid. It is found in the chloroplast thylakoid membrane. It localises to the chloroplast envelope. The protein resides in the chloroplast stroma. In terms of biological role, involved in the import of light-harvesting complex proteins (LHCP) and subsequent routing of these proteins to the chloroplast signal recognition particle (SRP) pathway. The chain is Protein LHCP TRANSLOCATION DEFECT (LTD) from Arabidopsis thaliana (Mouse-ear cress).